A 369-amino-acid chain; its full sequence is S-(hydroxymethyl)glutathione dehydrogenase (369 aa).

Zn(2+)-binding residues include cysteine 40, histidine 62, cysteine 92, cysteine 95, cysteine 98, cysteine 106, and cysteine 169.

It belongs to the zinc-containing alcohol dehydrogenase family. Class-III subfamily. Homodimer. Requires Zn(2+) as cofactor.

It is found in the cytoplasm. The enzyme catalyses S-(hydroxymethyl)glutathione + NADP(+) = S-formylglutathione + NADPH + H(+). It carries out the reaction S-(hydroxymethyl)glutathione + NAD(+) = S-formylglutathione + NADH + H(+). It catalyses the reaction a primary alcohol + NAD(+) = an aldehyde + NADH + H(+). The catalysed reaction is a secondary alcohol + NAD(+) = a ketone + NADH + H(+). The enzyme catalyses S-nitrosoglutathione + NADH + H(+) = S-(hydroxysulfenamide)glutathione + NAD(+). Has high formaldehyde dehydrogenase activity in the presence of glutathione and catalyzes the oxidation of normal alcohols in a reaction that is not GSH-dependent. In addition, hemithiolacetals other than those formed from GSH, including omega-thiol fatty acids, also are substrates. Also acts as a S-nitroso-glutathione reductase by catalyzing the NADH-dependent reduction of S-nitrosoglutathione. This Escherichia coli (strain ATCC 8739 / DSM 1576 / NBRC 3972 / NCIMB 8545 / WDCM 00012 / Crooks) protein is S-(hydroxymethyl)glutathione dehydrogenase (frmA).